A 310-amino-acid polypeptide reads, in one-letter code: tRNA dimethylallyltransferase (310 aa).

24–31 (GPTASGKT) contributes to the ATP binding site. 26–31 (TASGKT) is a substrate binding site. The interaction with substrate tRNA stretch occupies residues 49–52 (DSRQ).

It belongs to the IPP transferase family. Monomer. Mg(2+) serves as cofactor.

It carries out the reaction adenosine(37) in tRNA + dimethylallyl diphosphate = N(6)-dimethylallyladenosine(37) in tRNA + diphosphate. Its function is as follows. Catalyzes the transfer of a dimethylallyl group onto the adenine at position 37 in tRNAs that read codons beginning with uridine, leading to the formation of N6-(dimethylallyl)adenosine (i(6)A). The sequence is that of tRNA dimethylallyltransferase from Synechococcus sp. (strain CC9311).